An 88-amino-acid polypeptide reads, in one-letter code: Small ribosomal subunit protein uS15 (88 aa).

Belongs to the universal ribosomal protein uS15 family. In terms of assembly, part of the 30S ribosomal subunit. Forms a bridge to the 50S subunit in the 70S ribosome, contacting the 23S rRNA.

Functionally, one of the primary rRNA binding proteins, it binds directly to 16S rRNA where it helps nucleate assembly of the platform of the 30S subunit by binding and bridging several RNA helices of the 16S rRNA. Forms an intersubunit bridge (bridge B4) with the 23S rRNA of the 50S subunit in the ribosome. In Metamycoplasma arthritidis (strain 158L3-1) (Mycoplasma arthritidis), this protein is Small ribosomal subunit protein uS15.